A 201-amino-acid chain; its full sequence is Peptide deformylase (201 aa).

A disordered region spans residues 1–21 (MANHFSQLAKKSRTNGNAEKI). 2 residues coordinate Fe cation: Cys121 and His163. Residue Glu164 is part of the active site. His167 contacts Fe cation.

It belongs to the polypeptide deformylase family. Requires Fe(2+) as cofactor.

The enzyme catalyses N-terminal N-formyl-L-methionyl-[peptide] + H2O = N-terminal L-methionyl-[peptide] + formate. Functionally, removes the formyl group from the N-terminal Met of newly synthesized proteins. Requires at least a dipeptide for an efficient rate of reaction. N-terminal L-methionine is a prerequisite for activity but the enzyme has broad specificity at other positions. The sequence is that of Peptide deformylase from Prochlorococcus marinus (strain AS9601).